The sequence spans 423 residues: Serine/threonine-protein kinase ppk25 (423 aa).

Residues serine 36 and serine 38 each carry the phosphoserine modification. The Protein kinase domain maps to 53 to 305 (WIIKKTIGAG…LEQAAKFPWL (253 aa)). ATP is bound by residues 59–67 (IGAGSMGKV) and lysine 82. Aspartate 175 serves as the catalytic Proton acceptor.

The protein belongs to the protein kinase superfamily. Ser/Thr protein kinase family.

It localises to the cytoplasm. The catalysed reaction is L-seryl-[protein] + ATP = O-phospho-L-seryl-[protein] + ADP + H(+). It catalyses the reaction L-threonyl-[protein] + ATP = O-phospho-L-threonyl-[protein] + ADP + H(+). The polypeptide is Serine/threonine-protein kinase ppk25 (ppk25) (Schizosaccharomyces pombe (strain 972 / ATCC 24843) (Fission yeast)).